Consider the following 412-residue polypeptide: Maltoporin (412 aa).

A signal peptide spans 1 to 22; it reads MKKVSVIAAAVAATLAAGSAFA.

It belongs to the porin LamB (TC 1.B.3) family. Homotrimer formed of three 18-stranded antiparallel beta-barrels, containing three independent channels.

The protein localises to the cell outer membrane. The enzyme catalyses beta-maltose(in) = beta-maltose(out). Its function is as follows. Involved in the transport of maltose and maltodextrins. The polypeptide is Maltoporin (Vibrio cholerae serotype O1 (strain ATCC 39315 / El Tor Inaba N16961)).